A 486-amino-acid polypeptide reads, in one-letter code: Glutamate--tRNA ligase (486 aa).

Residues 11–21 (PSPTGVVHIGN) carry the 'HIGH' region motif. The short motif at 255 to 259 (KLSKR) is the 'KMSKS' region element. Residue Lys258 participates in ATP binding.

It belongs to the class-I aminoacyl-tRNA synthetase family. Glutamate--tRNA ligase type 1 subfamily. In terms of assembly, monomer.

It localises to the cytoplasm. The catalysed reaction is tRNA(Glu) + L-glutamate + ATP = L-glutamyl-tRNA(Glu) + AMP + diphosphate. Functionally, catalyzes the attachment of glutamate to tRNA(Glu) in a two-step reaction: glutamate is first activated by ATP to form Glu-AMP and then transferred to the acceptor end of tRNA(Glu). The sequence is that of Glutamate--tRNA ligase from Streptococcus pneumoniae (strain CGSP14).